Here is a 647-residue protein sequence, read N- to C-terminus: MFALDSIVGKHINYALDKTQHLPNKINNSITNTEIILQDYQYFASRIFIGLKNLNSMLLFWDTGTGKTLTAVYIIKYIKELFPRWIILIFIKKSLYVDPWLNTISSYISDTSNIKFIYYDSTSSLDKFNNIYRSIESSLNKKNRLLIIIDEVHKLISRSVKKDNSERNFTPIYRKLIKLANYENNKILCMSATPITNNIAEFNNLIGLLRPNVMNIKEEYINNGKLINFKEIRETLLGICSYKRLIEADSLTDTNYIDGYAKKSIFYHNIIMSDEQSKLYNMAERYDYKTELGGLKTMRRLISSFAFYDLKIKGDLDNVEYNEMIKRKLAEFSEFTKNINFSKEFINAFKNNEIKTKTDLLITDINNYNILYQYSCKYIEACRIILNSRGKVLLFEPLVNFEGISSLKYYFNCFNISYIEYSSKTIKMRDNDLNYYNNYENNDGNKIKVCIFSYAGSEGISFKCINDIIILDMPWNESELKQIIGRSIRLNSHEYLPINYRYVNVHFIISYSNNRKSVDKEILDIIKNKQGKINVVFDLLKASPIEIIHNMYKYIEPVDNEIIFETIRKTRMKEMNISNVIINLKLYPITYCKDYDRATILKGLLNKDTNIIYDNDTPVAILLVDNNNLPIFVIENDILIYITNDYY.

One can recognise a Helicase ATP-binding domain in the interval F48–N212. W61–T68 serves as a coordination point for ATP. The DEXH box signature appears at D150–H153. Residues Y378–K541 form the Helicase C-terminal domain. The binding to the cap-specific mRNA (nucleoside-2'-O-)-methyltransferase stretch occupies residues D467 to I533.

It belongs to the helicase family. NPH I subfamily. Monomer. Interacts (via C-terminus) with RAP94 (via N-terminus). Interacts with the cap-specific mRNA (nucleoside-2'-O-)-methyltransferase.

The protein localises to the virion. It carries out the reaction a ribonucleoside 5'-triphosphate + H2O = a ribonucleoside 5'-diphosphate + phosphate + H(+). Functionally, DNA-dependent ATPase required for providing the needed energy to achieve the termination of early transcripts. Acts in concert with the RAP94 subunit of the virion RNA polymerase and the capping enzyme/VTF to catalyze release of UUUUUNU-containing nascent RNA from the elongation complex. NPH-I must bind ssDNA in order to exhibit ATPase activity. This chain is Nucleoside triphosphatase I (NPH1), found in Choristoneura fumiferana (Spruce budworm moth).